Reading from the N-terminus, the 445-residue chain is Cytoplasmic tRNA 2-thiolation protein 2 (445 aa).

A compositionally biased stretch (acidic residues) spans 1 to 11; it reads MCSIGEDDFGD. The tract at residues 1–26 is disordered; sequence MCSIGEDDFGDEGGVHAMKEESPLPE. Positions 13–22 are enriched in basic and acidic residues; the sequence is GGVHAMKEES.

This sequence belongs to the CTU2/NCS2 family.

It is found in the cytoplasm. It functions in the pathway tRNA modification; 5-methoxycarbonylmethyl-2-thiouridine-tRNA biosynthesis. In terms of biological role, plays a central role in 2-thiolation of mcm(5)S(2)U at tRNA wobble positions of tRNA(Lys), tRNA(Glu) and tRNA(Gln). May act by forming a heterodimer with NCS6/CTU1 that ligates sulfur from thiocarboxylated URM1 onto the uridine of tRNAs at wobble position. This is Cytoplasmic tRNA 2-thiolation protein 2 from Aedes aegypti (Yellowfever mosquito).